A 354-amino-acid polypeptide reads, in one-letter code: MGHLLMLWVAAGMCYPALGASAWSVNNFLITRPKAYLTYTASVALGAQIGIEECKFQFAWERWNCPEHAFQFSTHNRLRAATRETSFIHAIRSAAIMYAVTKNCSMGDLENCGCDESQNGKTGGHGWIWGGCSDNVEFGEKISRLFVDSLEKGKDARALVNLHNNRAGRLAVRASTKRTCKCHGISGSCSIQTCWLQLADFRQMGNYLKAKYDRALKIEMDKRQLRAGNRAEGRWALTEAFLPSTEAELIFLEGSPDYCNRNASLSIQGTEGRECLQNARSASRREQRSCGRLCTECGLQVEERRAEAVSSCDCNFQWCCTVKCGQCRRVVSRYYCTRPVGSARPRGRGKDSAW.

Residues methionine 1–glycine 19 form the signal peptide. A disulfide bond links cysteine 54 and cysteine 65. The N-linked (GlcNAc...) asparagine glycan is linked to asparagine 103. 10 disulfide bridges follow: cysteine 104-cysteine 112, cysteine 114-cysteine 132, cysteine 180-cysteine 194, cysteine 182-cysteine 189, cysteine 259-cysteine 297, cysteine 275-cysteine 290, cysteine 294-cysteine 336, cysteine 312-cysteine 327, cysteine 314-cysteine 324, and cysteine 319-cysteine 320. Serine 186 carries O-palmitoleoyl serine lipidation. Asparagine 262 carries an N-linked (GlcNAc...) asparagine glycan.

Belongs to the Wnt family. Forms a soluble 1:1 complex with AFM; this prevents oligomerization and is required for prolonged biological activity. The complex with AFM may represent the physiological form in body fluids. Post-translationally, palmitoleoylation is required for efficient binding to frizzled receptors. Depalmitoleoylation leads to Wnt signaling pathway inhibition. In terms of processing, proteolytic processing by TIKI1 and TIKI2 promotes oxidation and formation of large disulfide-bond oligomers, leading to inactivation of WNT8A.

The protein localises to the secreted. The protein resides in the extracellular space. Its subcellular location is the extracellular matrix. Functionally, ligand for members of the frizzled family of seven transmembrane receptors. Plays a role in embryonic patterning. The chain is Protein Wnt-8a (Wnt8a) from Mus musculus (Mouse).